Reading from the N-terminus, the 535-residue chain is MASLSLAPVNIFKAGADEERAETARLTSFIGAIAIGDLVKSTLGPKGMDKILLSSGRDASLMVTNDGATILKNIGVDNPAAKVLVDMSRVQDDEVGDGTTSVTVLAAELLREAESLIAKKIHPQTIIAGWREATKAAREALLSSAVDHGSDEVKFRQDLMNIAGTTLSSKLLTHHKDHFTKLAVEAVLRLKGSGNLEAIHIIKKLGGSLADSYLDEGFLLDKKIGVNQPKRIENAKILIANTGMDTDKIKIFGSRVRVDSTAKVAEIEHAEKEKMKEKVERILKHGINCFINRQLIYNYPEQLFGAAGVMAIEHADFAGVERLALVTGGEIASTFDHPELVKLGSCKLIEEVMIGEDKLIHFSGVALGEACTIVLRGATQQILDEAERSLHDALCVLAQTVKDSRTVYGGGCSEMLMAHAVTQLANRTPGKEAVAMESYAKALRMLPTIIADNAGYDSADLVAQLRAAHSEGNTTAGLDMREGTIGDMAILGITESFQVKRQVLLSAAEAAEVILRVDNIIKAAPRKRVPDHHPC.

N-acetylmethionine is present on Met1. Ala2 is subject to N-acetylalanine. At Ser3 the chain carries Phosphoserine. At Lys13 the chain carries N6-acetyllysine. Gly44 serves as a coordination point for ADP. An ATP-binding site is contributed by Gly44. Ser60 bears the Phosphoserine mark. Asp97 lines the Mg(2+) pocket. Residues Gly98, Thr99, Thr100, and Ser101 each coordinate ADP. Positions 98, 99, and 100 each coordinate ATP. At Lys154 the chain carries N6-acetyllysine. The ADP site is built by Ser168 and Ser169. An N6-acetyllysine modification is found at Lys181. Residue Lys248 forms a Glycyl lysine isopeptide (Lys-Gly) (interchain with G-Cter in SUMO2) linkage. Residue Ser260 is modified to Phosphoserine. Phosphothreonine is present on Thr261. 3 residues coordinate ADP: Gly410, Glu495, and Lys500. 2 residues coordinate ATP: Glu495 and Lys500.

This sequence belongs to the TCP-1 chaperonin family. In terms of assembly, component of the chaperonin-containing T-complex (TRiC), a hexadecamer composed of two identical back-to-back stacked rings enclosing a protein folding chamber. Each ring is made up of eight different subunits: TCP1/CCT1, CCT2, CCT3, CCT4, CCT5, CCT6A/CCT6, CCT7, CCT8. Interacts with PACRG. Interacts with FLCN. Interacts with DLEC1. Interacts with SVEP1.

The protein localises to the cytoplasm. It carries out the reaction ATP + H2O = ADP + phosphate + H(+). Its function is as follows. Component of the chaperonin-containing T-complex (TRiC), a molecular chaperone complex that assists the folding of actin, tubulin and other proteins upon ATP hydrolysis. The TRiC complex mediates the folding of WRAP53/TCAB1, thereby regulating telomere maintenance. As part of the TRiC complex may play a role in the assembly of BBSome, a complex involved in ciliogenesis regulating transports vesicles to the cilia. The polypeptide is T-complex protein 1 subunit beta (Homo sapiens (Human)).